Consider the following 491-residue polypeptide: MIRVRGIHSTAIAGLLDEAGFRFADLSQELLARIPQLRVEERVLVTVKDTDDRSGVVVLGDRAVVEKVAYLLRAVIPGALVSYVGEGPYTTYAVRLLSRVEGDVYEAEYSPGKRTTVKLRRPHVEGEVIMAHVIRASPEAPLLKEGVAITGSLVRLVQFDRHSVSEHIRDENLRLQLLTLAMTSAPTGWGVHFRSASKRASIVDVMAEIKALSEKAEKILKEVAPKEPGVVVPGEAIAIVEIPADASIRMDALRSRYYPTLPLHHLLKRLGDDELSRAVDFSERLLAGCEKCLSSTGAIEVFLERLSSLKGRQVSVLHRKVAGAGHVWSAEVESVKRMTVVLKRVVSSPGLYDGFEGLKREPGDVIRSYTWLFGRAVVHFYTSARGELKGVYVNINAPVFFAGNANTLGYVDLGVDVTRAADEEPKVVDLAEFLDLVERGVLDKQLAGSYLEFAESVKHLLEKDIGEDLPARIMQAQKSIFSFETDKLLAV.

This sequence belongs to the FAU-1 family.

Its function is as follows. Probable RNase involved in rRNA stability through maturation and/or degradation of precursor rRNAs. Binds to RNA in loop regions with AU-rich sequences. The chain is Probable ribonuclease FAU-1 from Thermofilum pendens (strain DSM 2475 / Hrk 5).